The following is a 217-amino-acid chain: Adr-2-binding protein 1 (217 aa).

The disordered stretch occupies residues 33 to 65 (ARPEPQHDSLKRRNTTSSIAKKKAKMTRGDEQI). The span at 44–58 (RRNTTSSIAKKKAKM) shows a compositional bias: basic residues.

Interacts with double-stranded RNA-specific adenosine deaminase adr-2. As to expression, expressed in main body hypodermal cells, the hypodermal seam cells, pharynx, intestine and some neurons.

The protein localises to the nucleus. Required for the A-I editing activity of the double-stranded RNA-specific adenosine deaminase adr-2 by facilitating adr-2 nuclear localization. The polypeptide is Adr-2-binding protein 1 (Caenorhabditis elegans).